The chain runs to 365 residues: Peptide chain release factor 2 (365 aa).

At Gln251 the chain carries N5-methylglutamine.

It belongs to the prokaryotic/mitochondrial release factor family. Methylated by PrmC. Methylation increases the termination efficiency of RF2.

It localises to the cytoplasm. In terms of biological role, peptide chain release factor 2 directs the termination of translation in response to the peptide chain termination codons UGA and UAA. The polypeptide is Peptide chain release factor 2 (Campylobacter jejuni subsp. jejuni serotype O:2 (strain ATCC 700819 / NCTC 11168)).